We begin with the raw amino-acid sequence, 662 residues long: UvrABC system protein B (662 aa).

One can recognise a Helicase ATP-binding domain in the interval 25–412 (EGIEKGLKMQ…SQKIVEQIIR (388 aa)). Residue 38-45 (GVTGSGKT) coordinates ATP. The short motif at 91–114 (YYDYYQPEAYLPATDTYIEKDSAI) is the Beta-hairpin element. A Helicase C-terminal domain is found at 429-595 (QVDDLYGEIK…TVQKAVRDVI (167 aa)). In terms of domain architecture, UVR spans 622 to 657 (KQYVEKLTREMKEAAKALEFEKAAMLRDLIIELRAQ).

The protein belongs to the UvrB family. Forms a heterotetramer with UvrA during the search for lesions. Interacts with UvrC in an incision complex.

The protein localises to the cytoplasm. Functionally, the UvrABC repair system catalyzes the recognition and processing of DNA lesions. A damage recognition complex composed of 2 UvrA and 2 UvrB subunits scans DNA for abnormalities. Upon binding of the UvrA(2)B(2) complex to a putative damaged site, the DNA wraps around one UvrB monomer. DNA wrap is dependent on ATP binding by UvrB and probably causes local melting of the DNA helix, facilitating insertion of UvrB beta-hairpin between the DNA strands. Then UvrB probes one DNA strand for the presence of a lesion. If a lesion is found the UvrA subunits dissociate and the UvrB-DNA preincision complex is formed. This complex is subsequently bound by UvrC and the second UvrB is released. If no lesion is found, the DNA wraps around the other UvrB subunit that will check the other stand for damage. In Carboxydothermus hydrogenoformans (strain ATCC BAA-161 / DSM 6008 / Z-2901), this protein is UvrABC system protein B.